Here is a 187-residue protein sequence, read N- to C-terminus: Elongation factor P (187 aa).

Belongs to the elongation factor P family.

It localises to the cytoplasm. It participates in protein biosynthesis; polypeptide chain elongation. Its function is as follows. Involved in peptide bond synthesis. Stimulates efficient translation and peptide-bond synthesis on native or reconstituted 70S ribosomes in vitro. Probably functions indirectly by altering the affinity of the ribosome for aminoacyl-tRNA, thus increasing their reactivity as acceptors for peptidyl transferase. This chain is Elongation factor P, found in Desulfatibacillum aliphaticivorans.